The following is a 186-amino-acid chain: MKIIAVTGYKPFELGIFKQDEPALQYIKAELQKRLTALIEDGLEWVLISGQLGAEIWTAEVVFELQEEYPALKLAVITPFYDQEERWNEQNKELYEGILAQADFVESVTHRPYESPAQFKQKNRFFIEKTDGLLALYDPEHDGSPKYMIKEAENYTDYPIMYITMDDLRAQVEAEDPFFDEKQEKI.

Belongs to the UPF0398 family.

The sequence is that of UPF0398 protein BPUM_1952 from Bacillus pumilus (strain SAFR-032).